The chain runs to 612 residues: MKASYLETLDRIKDEHAEMSKHVNQQRSDIEKVALEKENMNRSYMTYAEVSNTLRSDLRKAEEINKRLQEFIMQSLAPQLSQDNQANCLAALEAFKTASPRENGNGAPALPPGFPPGAAGMLGMMPNMPFGMSPAMSQLFNQFASPHVNGGDGAGGSSGGASEAKKAKLEDPDDGELEIDVTNDDHPSTASNGGAANKNGRDSTNSVASSGASTPSIASNSRARQQQQPLAGLQGLEQMNFLAGFNPNLLRQASAAGGFNFLNDPHAQARLAAAIGQIGSRPAYSFKIVDGGVPTPTSFPPDAQKGPGIPTGLKKKMELNHGEVVCAATISRDNSRVYTGGKGCVKIWDVKESDISGATVVNRPPIASLDCLKENYIRSCKLFEDGNTLLIGGEASTVALWDLTTETKTLDLETDSQACYALAMSPDEKLLFACLADGNILIYDIHNKVKVGTLPGHQDGASCLDLSKDGTKLWSGGLDNSVRCWDLAQRKEVAKHDFASQVFSLGCCPNDEWVAVGMENNYVEVLSTTGKEKYQLTQHESCVLSLKFAHSGKFFISTGKDNALNAWRTPYGASLFQLKENSSVLSCDISFDDSLIVTGSGEKKATLYAVEY.

The disordered stretch occupies residues 143 to 228 (FASPHVNGGD…SNSRARQQQQ (86 aa)). Residues 150–159 (GGDGAGGSSG) are compositionally biased toward gly residues. Residues 153–196 (GAGGSSGGASEAKKAKLEDPDDGELEIDVTNDDHPSTASNGGAA) form a CCN domain region. The segment covering 171 to 182 (DPDDGELEIDVT) has biased composition (acidic residues). Over residues 202-221 (DSTNSVASSGASTPSIASNS) the composition is skewed to polar residues. 6 WD repeats span residues 308-339 (GIPT…RVYT), 372-402 (LKEN…ALWD), 414-444 (TDSQ…LIYD), 456-486 (GHQD…RCWD), 538-568 (QHES…NAWR), and 579-609 (KENS…TLYA).

It belongs to the WD repeat Groucho/TLE family. In terms of assembly, interacts with unc-4. Interacts with ref-1. May interact with mls-1.

The protein localises to the nucleus. Functionally, transcriptional corepressor that functions with the neural specificity gene unc-4 to govern motor neuron identity. In concert with unc-4, represses the expression of VB-specific genes such as ceh-12, thereby preventing the adoption of VB motor neuron fate. May function with transcription factor mls-1 to promote uterine muscle specification and formation. This chain is Transcription factor unc-37 (unc-37), found in Caenorhabditis elegans.